We begin with the raw amino-acid sequence, 212 residues long: Uridine kinase (212 aa).

ATP is bound at residue 13–20; the sequence is GASASGKS.

Belongs to the uridine kinase family.

Its subcellular location is the cytoplasm. It catalyses the reaction uridine + ATP = UMP + ADP + H(+). It carries out the reaction cytidine + ATP = CMP + ADP + H(+). It functions in the pathway pyrimidine metabolism; CTP biosynthesis via salvage pathway; CTP from cytidine: step 1/3. Its pathway is pyrimidine metabolism; UMP biosynthesis via salvage pathway; UMP from uridine: step 1/1. In Shewanella denitrificans (strain OS217 / ATCC BAA-1090 / DSM 15013), this protein is Uridine kinase.